The primary structure comprises 880 residues: Tyrosine-protein kinase receptor TYRO3 (880 aa).

Residues 1–28 (MVYPGPPGLIAGLLLAALSLSCVDGAKA) form the signal peptide. Ig-like C2-type domains lie at 29–114 (LGFV…KSVS) and 125–206 (PYFT…AIVE). Residues 29–414 (LGFVGHGYNL…QRHPHTRMSW (386 aa)) lie on the Extracellular side of the membrane. Residues N37 and N49 are each glycosylated (N-linked (GlcNAc...) asparagine). A disulfide bridge links C50 with C103. N-linked (GlcNAc...) asparagine glycosylation is present at N143. The cysteines at positions 146 and 189 are disulfide-linked. Fibronectin type-III domains follow at residues 213–306 (PPFN…TKET) and 311–401 (LPQN…SKEE). 4 N-linked (GlcNAc...) asparagine glycosylation sites follow: N216, N279, N351, and N365. Residues 415-435 (VPMVLGILTALVTVVAMTLIF) traverse the membrane as a helical segment. The Cytoplasmic segment spans residues 436–880 (LRKGRKETRF…MQEEQVVITL (445 aa)). The region spanning 503-774 (FTLGRTLGKG…VDLKQRLEAI (272 aa)) is the Protein kinase domain. Residues 509 to 517 (LGKGEFGSV) and K535 contribute to the ATP site. Residue D640 is the Proton acceptor of the active site. Y671 is subject to Phosphotyrosine; by autocatalysis. Residues 846-880 (EWSSSAQNGEARGLLHEEEEEEEEEMQEEQVVITL) are disordered. Residues 862 to 873 (EEEEEEEEEMQE) are compositionally biased toward acidic residues.

Belongs to the protein kinase superfamily. Tyr protein kinase family. AXL/UFO subfamily. Post-translationally, tyrosine phosphorylated upon receptor stimulation. As to expression, detected in brain, spinal cord, intestine, lung, stomach, ovary, testis, skin and eye.

The protein resides in the cell membrane. It catalyses the reaction L-tyrosyl-[protein] + ATP = O-phospho-L-tyrosyl-[protein] + ADP + H(+). Functionally, may be involved in cell adhesion processes, particularly in the central nervous system. This chain is Tyrosine-protein kinase receptor TYRO3 (tyro3), found in Xenopus laevis (African clawed frog).